Reading from the N-terminus, the 375-residue chain is 23S rRNA (uracil(747)-C(5))-methyltransferase RlmC (375 aa).

Residues C3, C11, C14, and C87 each contribute to the [4Fe-4S] cluster site. Residues Q212, F241, E262, and N307 each contribute to the S-adenosyl-L-methionine site. Residue C334 is the Nucleophile of the active site.

This sequence belongs to the class I-like SAM-binding methyltransferase superfamily. RNA M5U methyltransferase family. RlmC subfamily.

It carries out the reaction uridine(747) in 23S rRNA + S-adenosyl-L-methionine = 5-methyluridine(747) in 23S rRNA + S-adenosyl-L-homocysteine + H(+). Its function is as follows. Catalyzes the formation of 5-methyl-uridine at position 747 (m5U747) in 23S rRNA. This Escherichia coli O17:K52:H18 (strain UMN026 / ExPEC) protein is 23S rRNA (uracil(747)-C(5))-methyltransferase RlmC.